A 925-amino-acid chain; its full sequence is Bifunctional imidazolonepropionase/histidine ammonia-lyase (925 aa).

An imidazolonepropionase region spans residues 1 to 414 (MTKNSSTVFT…IKPHVRMEPF (414 aa)). Fe(3+) is bound by residues H73 and H75. Residues H73 and H75 each contribute to the Zn(2+) site. Residues R82, Y145, and H178 each contribute to the 4-imidazolone-5-propanoate site. Y145 contacts N-formimidoyl-L-glutamate. H243 serves as a coordination point for Fe(3+). A Zn(2+)-binding site is contributed by H243. Q246 is a 4-imidazolone-5-propanoate binding site. Position 318 (D318) interacts with Fe(3+). Position 318 (D318) interacts with Zn(2+). The N-formimidoyl-L-glutamate site is built by N320 and G322. T323 lines the 4-imidazolone-5-propanoate pocket. Residues 415–925 (MTIILKPGSV…SAGILPDLEA (511 aa)) form a histidine ammonia-lyase region. Residues 556-558 (ASG) constitute a cross-link (5-imidazolinone (Ala-Gly)). The residue at position 557 (S557) is a 2,3-didehydroalanine (Ser).

This sequence in the N-terminal section; belongs to the metallo-dependent hydrolases superfamily. HutI family. In the C-terminal section; belongs to the PAL/histidase family. Requires Zn(2+) as cofactor. Fe(3+) is required as a cofactor. Contains an active site 4-methylidene-imidazol-5-one (MIO), which is formed autocatalytically by cyclization and dehydration of residues Ala-Ser-Gly.

The protein resides in the cytoplasm. The catalysed reaction is 4-imidazolone-5-propanoate + H2O = N-formimidoyl-L-glutamate. It carries out the reaction L-histidine = trans-urocanate + NH4(+). Its pathway is amino-acid degradation; L-histidine degradation into L-glutamate; N-formimidoyl-L-glutamate from L-histidine: step 1/3. It participates in amino-acid degradation; L-histidine degradation into L-glutamate; N-formimidoyl-L-glutamate from L-histidine: step 3/3. Catalyzes the hydrolytic cleavage of the carbon-nitrogen bond in imidazolone-5-propanoate to yield N-formimidoyl-L-glutamate. It is the third step in the universal histidine degradation pathway. The polypeptide is Bifunctional imidazolonepropionase/histidine ammonia-lyase (hutIH) (Brucella melitensis biotype 1 (strain ATCC 23456 / CCUG 17765 / NCTC 10094 / 16M)).